We begin with the raw amino-acid sequence, 174 residues long: Shikimate kinase 2 (174 aa).

An ATP-binding site is contributed by 12–17 (GCGKTT). The Mg(2+) site is built by Thr16 and Asp32. Substrate is bound by residues Asp34, Arg58, and Gly79. An LID domain region spans residues 112–126 (EAYPLADQRPTLTGR). Arg120 contributes to the ATP binding site. Arg139 lines the substrate pocket. Gln155 contacts ATP.

The protein belongs to the shikimate kinase family. AroL subfamily. Monomer. Mg(2+) is required as a cofactor.

The protein localises to the cytoplasm. The catalysed reaction is shikimate + ATP = 3-phosphoshikimate + ADP + H(+). Its pathway is metabolic intermediate biosynthesis; chorismate biosynthesis; chorismate from D-erythrose 4-phosphate and phosphoenolpyruvate: step 5/7. In terms of biological role, catalyzes the specific phosphorylation of the 3-hydroxyl group of shikimic acid using ATP as a cosubstrate. The protein is Shikimate kinase 2 of Erwinia tasmaniensis (strain DSM 17950 / CFBP 7177 / CIP 109463 / NCPPB 4357 / Et1/99).